The following is a 153-amino-acid chain: Large ribosomal subunit protein uL22 (153 aa).

Belongs to the universal ribosomal protein uL22 family. In terms of assembly, part of the 50S ribosomal subunit.

In terms of biological role, this protein binds specifically to 23S rRNA. It makes multiple contacts with different domains of the 23S rRNA in the assembled 50S subunit and ribosome. The globular domain of the protein is located near the polypeptide exit tunnel on the outside of the subunit, while an extended beta-hairpin is found that lines the wall of the exit tunnel in the center of the 70S ribosome. The sequence is that of Large ribosomal subunit protein uL22 from Methanococcus vannielii (strain ATCC 35089 / DSM 1224 / JCM 13029 / OCM 148 / SB).